Consider the following 370-residue polypeptide: S-adenosylmethionine decarboxylase proenzyme (370 aa).

Phenylalanine 28 is a binding site for substrate. Active-site residues include glutamate 29 and glutamate 32. Glutamate 85 provides a ligand contact to substrate. Serine 86 acts as the Schiff-base intermediate with substrate; via pyruvic acid in catalysis. Residue serine 86 is modified to Pyruvic acid (Ser); by autocatalysis. Cysteine 100 serves as the catalytic Proton donor; for catalytic activity. Catalysis depends on proton acceptor; for processing activity residues serine 250 and histidine 263. Glutamate 267 contributes to the substrate binding site.

Belongs to the eukaryotic AdoMetDC family. In terms of assembly, forms a heterodimer with catalytically inactive AdoMetDC prozyme; heterodimerization is required to activate AdoMetDC. It depends on pyruvate as a cofactor. Post-translationally, is synthesized initially as an inactive proenzyme. Formation of the active enzyme involves a self-maturation process in which the active site pyruvoyl group is generated from an internal serine residue via an autocatalytic post-translational modification. Two non-identical subunits are generated from the proenzyme in this reaction, and the pyruvate is formed at the N-terminus of the alpha chain, which is derived from the carboxyl end of the proenzyme. The post-translation cleavage follows an unusual pathway, termed non-hydrolytic serinolysis, in which the side chain hydroxyl group of the serine supplies its oxygen atom to form the C-terminus of the beta chain, while the remainder of the serine residue undergoes an oxidative deamination to the alpha chain.

It carries out the reaction S-adenosyl-L-methionine + H(+) = S-adenosyl 3-(methylsulfanyl)propylamine + CO2. It functions in the pathway amine and polyamine biosynthesis; S-adenosylmethioninamine biosynthesis; S-adenosylmethioninamine from S-adenosyl-L-methionine: step 1/1. Its activity is regulated as follows. Allosterically activated by AdoMetDC prozyme. Activated by putrescine. Inhibited by spermine and methylglyoxal-bis(guanylhydrazone) (MGBG) and slightly by spermidine. Inhibited by 5'-([(Z)-4-amino-2-butenyl]methylamino)-5'-deoxyadenosine (MDL 73811). In terms of biological role, probably in association with catalytically inactive AdoMetDC prozyme, catalyzes the decarboxylation of S-adenosyl-L-methionine which is essential for the biosynthesis of the polyamine spermidine. Required for growth and survival during the bloodstream life cycle stage. This chain is S-adenosylmethionine decarboxylase proenzyme, found in Trypanosoma cruzi.